The chain runs to 405 residues: Argininosuccinate synthase (405 aa).

ATP contacts are provided by residues 10 to 18 (AYSGGLDTS) and Ala-37. The L-citrulline site is built by Tyr-88 and Ser-93. Gly-118 provides a ligand contact to ATP. Residues Thr-120, Asn-124, and Asp-125 each coordinate L-aspartate. Asn-124 contributes to the L-citrulline binding site. L-citrulline is bound by residues Arg-128, Ser-179, Ser-188, Glu-264, and Tyr-276.

This sequence belongs to the argininosuccinate synthase family. Type 1 subfamily. As to quaternary structure, homotetramer.

It localises to the cytoplasm. It carries out the reaction L-citrulline + L-aspartate + ATP = 2-(N(omega)-L-arginino)succinate + AMP + diphosphate + H(+). The protein operates within amino-acid biosynthesis; L-arginine biosynthesis; L-arginine from L-ornithine and carbamoyl phosphate: step 2/3. The chain is Argininosuccinate synthase from Pseudomonas syringae pv. tomato (strain ATCC BAA-871 / DC3000).